We begin with the raw amino-acid sequence, 263 residues long: Izumo sperm-egg fusion protein 3 (263 aa).

Positions 1-22 are cleaved as a signal peptide; the sequence is MGDLWVLLFSSLSLAAFHGVRG. Residues 23 to 176 are Extracellular-facing; sequence CLECDPKFTE…EDPKTAENRE (154 aa). Asn98 and Asn128 each carry an N-linked (GlcNAc...) asparagine glycan. Residues 177 to 197 form a helical membrane-spanning segment; the sequence is ISLYLIFIAEAVILASAVLLF. The Cytoplasmic segment spans residues 198–263; that stretch reads HVCISHRRKM…CAESEMQTGT (66 aa). Positions 241–263 are disordered; that stretch reads GRSNSNSLTGEPTCAESEMQTGT.

Belongs to the Izumo family. Monomer and homodimer. In terms of tissue distribution, sperm-specific (at protein level).

Its subcellular location is the cell membrane. It is found in the cytoplasmic vesicle. The protein localises to the secretory vesicle. The protein resides in the acrosome inner membrane. Plays an important role in the biogenesis of the acrosome during sperm development. This chain is Izumo sperm-egg fusion protein 3 (Izumo3), found in Mus musculus (Mouse).